Reading from the N-terminus, the 152-residue chain is MPLLLSGRKFRHDLEASGCLAINVPLEGGAETRLLRRLKAAGYKTQITSVRGLGDPEAFLLKLHGIRPPHLGHQNVGRNGALGEVQQVIPQVNELLAGEKSVVLWLLEGQVLSRSEILSLCDLCDKEPRLKIVIEMGGARALRWQSMRSFIQ.

Belongs to the complex I NdhN subunit family. As to quaternary structure, NDH-1 can be composed of about 15 different subunits; different subcomplexes with different compositions have been identified which probably have different functions.

It is found in the cellular thylakoid membrane. It carries out the reaction a plastoquinone + NADH + (n+1) H(+)(in) = a plastoquinol + NAD(+) + n H(+)(out). The catalysed reaction is a plastoquinone + NADPH + (n+1) H(+)(in) = a plastoquinol + NADP(+) + n H(+)(out). Functionally, NDH-1 shuttles electrons from an unknown electron donor, via FMN and iron-sulfur (Fe-S) centers, to quinones in the respiratory and/or the photosynthetic chain. The immediate electron acceptor for the enzyme in this species is believed to be plastoquinone. Couples the redox reaction to proton translocation, and thus conserves the redox energy in a proton gradient. Cyanobacterial NDH-1 also plays a role in inorganic carbon-concentration. In Prochlorococcus marinus (strain SARG / CCMP1375 / SS120), this protein is NAD(P)H-quinone oxidoreductase subunit N.